The chain runs to 183 residues: ATP synthase subunit b, chloroplastic (183 aa).

A helical membrane pass occupies residues 33–51; the sequence is IINLSVVIGVVVSFGGDAL.

Belongs to the ATPase B chain family. As to quaternary structure, F-type ATPases have 2 components, F(1) - the catalytic core - and F(0) - the membrane proton channel. F(1) has five subunits: alpha(3), beta(3), gamma(1), delta(1), epsilon(1). F(0) has four main subunits: a(1), b(1), b'(1) and c(10-14). The alpha and beta chains form an alternating ring which encloses part of the gamma chain. F(1) is attached to F(0) by a central stalk formed by the gamma and epsilon chains, while a peripheral stalk is formed by the delta, b and b' chains.

The protein resides in the plastid. It localises to the chloroplast thylakoid membrane. In terms of biological role, f(1)F(0) ATP synthase produces ATP from ADP in the presence of a proton or sodium gradient. F-type ATPases consist of two structural domains, F(1) containing the extramembraneous catalytic core and F(0) containing the membrane proton channel, linked together by a central stalk and a peripheral stalk. During catalysis, ATP synthesis in the catalytic domain of F(1) is coupled via a rotary mechanism of the central stalk subunits to proton translocation. Component of the F(0) channel, it forms part of the peripheral stalk, linking F(1) to F(0). The sequence is that of ATP synthase subunit b, chloroplastic from Oltmannsiellopsis viridis (Marine flagellate).